Reading from the N-terminus, the 294-residue chain is MVPKVVDLQRIANDKTRITTYKKRKASLYKKAQEFSTLCGVETCLIVYGPTKATDVVISEPEIWPKDETKVRAIIRKYKDTVSTSCRKETNVETFVNDVGKGNEVVTKKRVKRENKYSSWEEKLDKCSREQLHGIFCAVDSKLNEAVTRQERSMFRVNHQAMDTPFPQNLMDQQFMPQYFHEQPQFQGFPNNFNNMGFSLISPHDGQIQMDPNLMEKWTDLALTQSLMMSKGNDGTQFMQRQEQPYYNREQVVSRSAGFNVNPFMGYQVPFNIPNWRLSGNQVENWELSGKKTI.

In terms of domain architecture, MADS-box spans 1–51 (MVPKVVDLQRIANDKTRITTYKKRKASLYKKAQEFSTLCGVETCLIVYGPT).

Interacts with MEE14/CBP1.

It is found in the nucleus. In terms of biological role, probable transcription factor that may function in the maintenance of the proper function of the central cell in pollen tube attraction. This chain is Agamous-like MADS-box protein AGL82, found in Arabidopsis thaliana (Mouse-ear cress).